The sequence spans 2130 residues: Highly reducing polyketide synthase anuA (2130 aa).

The region spanning 1-213 (MKAGVLSGTS…GANCHVILEQ (213 aa)) is the Ketosynthase family 3 (KS3) domain. The 328-residue stretch at 317 to 644 (FVFTGQGSQW…SFAGNLWLKG (328 aa)) folds into the Malonyl-CoA:ACP transacylase (MAT) domain. Positions 701–836 (HELLGSLLTG…GSIAIHPRNA (136 aa)) are N-terminal hotdog fold. The PKS/mFAS DH domain maps to 701 to 1000 (HELLGSLLTG…LSPYQSTSQA (300 aa)). Histidine 733 acts as the Proton acceptor; for dehydratase activity in catalysis. The C-terminal hotdog fold stretch occupies residues 849-1000 (LESTAKRTWY…LSPYQSTSQA (152 aa)). Aspartate 914 (proton donor; for dehydratase activity) is an active-site residue. Residues 1405–1722 (GQLDTIYFQQ…SRSRIGKVAI (318 aa)) form the Enoyl reductase (ER) domain. The 181-residue stretch at 1747–1927 (SYVMVGCLGG…AVAVGLGMIS (181 aa)) folds into the Ketoreductase (KR) domain. The region spanning 2047–2125 (TLDEAVLDHI…SLRDLAMTSL (79 aa)) is the Carrier domain. At serine 2084 the chain carries O-(pantetheine 4'-phosphoryl)serine.

Requires pantetheine 4'-phosphate as cofactor.

It functions in the pathway secondary metabolite biosynthesis. In terms of biological role, highly reducing polyketide synthase; part of the gene cluster that mediates the biosynthesis of annullatin D, an alkylated aromatic polyketide with a fused dihydrobenzofuran lactone ring system that exhibits potent agonistic activities toward the cannabinoid receptors. The annullatin backbone 2-hydroxymethyl-3-pentylphenol is assembled from one acetyl-CoA starter unit and 5 malonyl-CoA elongation units by cooperation of the highly reducing polyketide synthase anuA, the short-chain dehydrogenase anuB and the oxidoreductase anuC, before being hydroxylated at the C-5 alkyl chain by the cytochrome P450 monooxygenase anuE to form (8S)-annullatin E. The prenyltransferase anuH subsequently installs one isoprenyl group at the benzene ring to form (8S)-annullatin J. Enzymatic or nonenzymatic dihydro-benzofuran ring formation between the prenyl and the phenolic hydroxyl groups in (8S)-annullatin J results in two diastereomers (2S,9S)-annullatin H and compound 12. The intermediate (2S,9S)-annullatin H is then converted to (2S,9S)-annullatin D by the FAD-linked oxidoreductase anuG-catalyzed five-member lactone ring formation. The isomer 12 acts as a substrate for the short-chain dehydrogenase anuF and is oxidized to (2R)-annullatin F, which is subsequently acetylated by an acetyltransferase leading to (2R)-annullatin G formation. The remaining enzymes identified within the cluster, anuD, anuI and anuJ, seem not to be involved in annullatin biosynthesis. The sequence is that of Highly reducing polyketide synthase anuA from Penicillium roqueforti (strain FM164).